A 370-amino-acid polypeptide reads, in one-letter code: 4-hydroxy-3-methylbut-2-en-1-yl diphosphate synthase (flavodoxin) (370 aa).

Cys-270, Cys-273, Cys-305, and Glu-312 together coordinate [4Fe-4S] cluster.

The protein belongs to the IspG family. [4Fe-4S] cluster serves as cofactor.

The enzyme catalyses (2E)-4-hydroxy-3-methylbut-2-enyl diphosphate + oxidized [flavodoxin] + H2O + 2 H(+) = 2-C-methyl-D-erythritol 2,4-cyclic diphosphate + reduced [flavodoxin]. It functions in the pathway isoprenoid biosynthesis; isopentenyl diphosphate biosynthesis via DXP pathway; isopentenyl diphosphate from 1-deoxy-D-xylulose 5-phosphate: step 5/6. In terms of biological role, converts 2C-methyl-D-erythritol 2,4-cyclodiphosphate (ME-2,4cPP) into 1-hydroxy-2-methyl-2-(E)-butenyl 4-diphosphate. This chain is 4-hydroxy-3-methylbut-2-en-1-yl diphosphate synthase (flavodoxin), found in Marinomonas sp. (strain MWYL1).